The following is a 1031-amino-acid chain: Caprin-2 (1031 aa).

Disordered regions lie at residues 1-27 (MKSAKSQVNQDQQGENQRALSPLQSTL), 364-458 (LQEE…SWEN), 500-520 (PKDVPKPLPQPIDSSSALPKD), 605-658 (DQAS…SSEA), and 830-876 (RSGT…SMTP). 2 stretches are compositionally biased toward polar residues: residues 425–439 (VSVQSEQSGSRSWTT) and 446–458 (ASVQPGTPVSWEN). Residues 608-646 (SSGSETEFTTSETPEMVVSPCKPKPASALASPNPPLSKS) are compositionally biased toward low complexity. Polar residues predominate over residues 830–853 (RSGTSSGLQANSRAGWSDSSQVSS). A phosphoserine mark is found at Ser-852 and Ser-853. The region spanning 897 to 1031 (PQQMRVAFSA…TFSGYLLYQD (135 aa)) is the C1q domain. Ca(2+) is bound by residues Asp-982 and Glu-988.

The protein belongs to the caprin family. In terms of assembly, homotrimer; via C1q domain. Found in a complex with LRP6, CCNY and CDK14 during G2/M stage; CAPRIN2 functions as a scaffold for the complex by binding to CCNY via its N terminus and to CDK14 via its C terminus. Interacts with LRP5. Interacts with LRP6. Specifically expressed in brain (at protein level).

It is found in the cytoplasm. Its subcellular location is the cell membrane. Functionally, promotes phosphorylation of the Wnt coreceptor LRP6, leading to increased activity of the canonical Wnt signaling pathway. Facilitates constitutive LRP6 phosphorylation by CDK14/CCNY during G2/M stage of the cell cycle, which may potentiate cells for Wnt signaling. May regulate the transport and translation of mRNAs, modulating for instance the expression of proteins involved in synaptic plasticity in neurons. Involved in regulation of growth as erythroblasts shift from a highly proliferative state towards their terminal phase of differentiation. May be involved in apoptosis. The polypeptide is Caprin-2 (Mus musculus (Mouse)).